A 438-amino-acid chain; its full sequence is Glycerol-3-phosphate acyltransferase 3 (438 aa).

Residues 14–34 (WLTLVGGLILLPSAFGLSLGI) traverse the membrane as a helical segment. 2 positions are modified to phosphoserine: S68 and S77. The next 2 helical transmembrane spans lie at 137–157 (ISPR…CFLL) and 161–181 (VTLA…VGQL). Residues 229–234 (HTSPID) carry the HXXXXD motif motif.

The protein belongs to the 1-acyl-sn-glycerol-3-phosphate acyltransferase family. In terms of tissue distribution, most abundant in epididymal fat, followed by small intestine, brown adipose tissue, kidney, heart and colon.

The protein resides in the endoplasmic reticulum membrane. It carries out the reaction sn-glycerol 3-phosphate + an acyl-CoA = a 1-acyl-sn-glycero-3-phosphate + CoA. The catalysed reaction is a 1-acyl-sn-glycero-3-phosphate + an acyl-CoA = a 1,2-diacyl-sn-glycero-3-phosphate + CoA. It catalyses the reaction dodecanoyl-CoA + sn-glycerol 3-phosphate = 1-dodecanoyl-sn-glycerol 3-phosphate + CoA. The enzyme catalyses sn-glycerol 3-phosphate + hexadecanoyl-CoA = 1-hexadecanoyl-sn-glycero-3-phosphate + CoA. It carries out the reaction sn-glycerol 3-phosphate + (9Z)-octadecenoyl-CoA = 1-(9Z-octadecenoyl)-sn-glycero-3-phosphate + CoA. The catalysed reaction is (9Z,12Z)-octadecadienoyl-CoA + sn-glycerol 3-phosphate = 1-(9Z,12Z)-octadecadienoyl-sn-glycero-3-phosphate + CoA. It catalyses the reaction 1-tetradecanoyl-sn-glycerol 3-phosphate + (9Z)-octadecenoyl-CoA = 1-tetradecanoyl-2-(9Z)-octadecenoyl-sn-glycero-3-phosphate + CoA. The enzyme catalyses 1-hexadecanoyl-sn-glycero-3-phosphate + (9Z)-octadecenoyl-CoA = 1-hexadecanoyl-2-(9Z-octadecenoyl)-sn-glycero-3-phosphate + CoA. It carries out the reaction 1-(9Z-octadecenoyl)-sn-glycero-3-phosphate + (9Z)-octadecenoyl-CoA = 1,2-di-(9Z-octadecenoyl)-sn-glycero-3-phosphate + CoA. The catalysed reaction is 1-(6Z,9Z,12Z-octadecatrienoyl)-sn-glycero-3-phosphate + (9Z)-octadecenoyl-CoA = (6Z,9Z,12Z)-octadecatrienoyl-2-(9Z)-octadecenoyl-sn-glycero-3-phosphate + CoA. It catalyses the reaction 1-(9Z,12Z,15Z)-octadecatrienoyl-sn-glycero-3-phosphate + (9Z)-octadecenoyl-CoA = 1-(9Z,12Z,15Z)-octadecatrienoyl-2-(9Z)-octadecenoyl-sn-glycero-3-phosphate + CoA. The enzyme catalyses 1-(9Z-octadecenoyl)-sn-glycero-3-phosphate + tetradecanoyl-CoA = 1-(9Z)-octadecenoyl-2-tetradecanoyl-sn-glycero-3-phosphate + CoA. It carries out the reaction 1-(9Z-octadecenoyl)-sn-glycero-3-phosphate + hexadecanoyl-CoA = 1-(9Z)-octadecenoyl-2-hexadecanoyl-sn-glycero-3-phosphate + CoA. The catalysed reaction is 1-(9Z-octadecenoyl)-sn-glycero-3-phosphate + octadecanoyl-CoA = 1-(9Z-octadecenoyl)-2-octadecanoyl-sn-glycero-3-phosphate + CoA. It catalyses the reaction 1-(9Z-octadecenoyl)-sn-glycero-3-phosphate + (9Z,12Z)-octadecadienoyl-CoA = 1-(9Z)-octadecenoyl-2-(9Z,12Z)-octadecadienoyl-sn-glycero-3-phosphate + CoA. The enzyme catalyses 1-(5Z,8Z,11Z,14Z-eicosatetraenoyl)-sn-glycero-3-phosphate + (9Z)-octadecenoyl-CoA = 1-(5Z,8Z,11Z,14Z)-eicosatetraenoyl-2-(9Z)-octadecenoyl-sn-glycero-3-phosphate + CoA. The protein operates within glycerolipid metabolism; triacylglycerol biosynthesis. It participates in phospholipid metabolism; CDP-diacylglycerol biosynthesis; CDP-diacylglycerol from sn-glycerol 3-phosphate: step 1/3. Functionally, converts glycerol-3-phosphate to 1-acyl-sn-glycerol-3-phosphate (lysophosphatidic acid or LPA) by incorporating an acyl moiety at the sn-1 position of the glycerol backbone. Also converts LPA into 1,2-diacyl-sn-glycerol-3-phosphate (phosphatidic acid or PA) by incorporating an acyl moiety at the sn-2 position of the glycerol backbone. Protects cells against lipotoxicity. This Mus musculus (Mouse) protein is Glycerol-3-phosphate acyltransferase 3.